The sequence spans 274 residues: Imidazole glycerol phosphate synthase subunit HisF (274 aa).

Residues D11 and D134 contribute to the active site.

It belongs to the HisA/HisF family. In terms of assembly, heterodimer of HisH and HisF.

The protein localises to the cytoplasm. It catalyses the reaction 5-[(5-phospho-1-deoxy-D-ribulos-1-ylimino)methylamino]-1-(5-phospho-beta-D-ribosyl)imidazole-4-carboxamide + L-glutamine = D-erythro-1-(imidazol-4-yl)glycerol 3-phosphate + 5-amino-1-(5-phospho-beta-D-ribosyl)imidazole-4-carboxamide + L-glutamate + H(+). It participates in amino-acid biosynthesis; L-histidine biosynthesis; L-histidine from 5-phospho-alpha-D-ribose 1-diphosphate: step 5/9. Functionally, IGPS catalyzes the conversion of PRFAR and glutamine to IGP, AICAR and glutamate. The HisF subunit catalyzes the cyclization activity that produces IGP and AICAR from PRFAR using the ammonia provided by the HisH subunit. In Methanobrevibacter smithii (strain ATCC 35061 / DSM 861 / OCM 144 / PS), this protein is Imidazole glycerol phosphate synthase subunit HisF.